The following is an 89-amino-acid chain: Rho beta-crystallin (89 aa).

His-31 contributes to the substrate binding site.

The protein belongs to the aldo/keto reductase family. As to quaternary structure, monomer.

The polypeptide is Rho beta-crystallin (Lepidodactylus lugubris (Mourning gecko)).